The primary structure comprises 431 residues: CCA-adding enzyme (431 aa).

ATP-binding residues include Ser-50 and Lys-53. Residues Ser-50 and Lys-53 each contribute to the CTP site. Mg(2+) contacts are provided by Asp-61, Asp-63, and Asp-112. ATP-binding residues include His-135, Lys-155, and Tyr-164. CTP contacts are provided by His-135, Lys-155, and Tyr-164.

This sequence belongs to the tRNA nucleotidyltransferase/poly(A) polymerase family. Archaeal CCA-adding enzyme subfamily. In terms of assembly, homodimer. Mg(2+) is required as a cofactor.

It catalyses the reaction a tRNA precursor + 2 CTP + ATP = a tRNA with a 3' CCA end + 3 diphosphate. The enzyme catalyses a tRNA with a 3' CCA end + 2 CTP + ATP = a tRNA with a 3' CCACCA end + 3 diphosphate. Catalyzes the addition and repair of the essential 3'-terminal CCA sequence in tRNAs without using a nucleic acid template. Adds these three nucleotides in the order of C, C, and A to the tRNA nucleotide-73, using CTP and ATP as substrates and producing inorganic pyrophosphate. tRNA 3'-terminal CCA addition is required both for tRNA processing and repair. Also involved in tRNA surveillance by mediating tandem CCA addition to generate a CCACCA at the 3' terminus of unstable tRNAs. While stable tRNAs receive only 3'-terminal CCA, unstable tRNAs are marked with CCACCA and rapidly degraded. This Thermoplasma acidophilum (strain ATCC 25905 / DSM 1728 / JCM 9062 / NBRC 15155 / AMRC-C165) protein is CCA-adding enzyme.